Here is an 853-residue protein sequence, read N- to C-terminus: MSTSETFDAHTPMMQQYLKLKAQHPDILLFYRMGDFYELFYDDAKRASQLLDISLTKRGASAGEPIPMAGVPHHAVENYLAKLVNLGESVAICEQIGDPATSKGPVERKVVRIVTPGTISDEALLQERQDNLLAAIWQDSKGFGYATLDISSGRFRVSEPQDRETMAAELQRTNPAELLYAEDFAEMSLIEGRRGLRRRPLWEFELDTARQQLNLQFGTRDLVGFGVENAPRGLCAAGCLLQYVKDTQRTSLPHIRSITMERQQDGIIMDAATRRNLEITQNLAGGVENTLASVLDCTVTPMGSRMLKRWLHMPVRDTSVLRHRQQAIAALMEYSTEIQPVLRQVGDLERILARLALRTARPRDLARMRHAFQQLPTLNTLLADIEAEYVQTLREQMGDFAELRDLLERAIIEAPPVLVRDGGVIAPGYHEELDEWRALADGATDYLDRLEIREREKLGIDTLKVGFNAVHGYFIQVSRGQSHMVPIHYVRRQTLKNAERYIIPELKEYEDKVLTSKGKALALEKQLYDELFDLLLPHLAELQKSAAALAELDVLTNLAERADTLNYHCPTLTDKPGIRLVEGRHPVVERVLNEPFIANPLSLSPQRRMLIITGPNMGGKSTYMRQTALIVLMAYIGSFVPAEQAEIGPIDRIFTRVGAADDLASGRSTFMVEMTETANILHNATEHSLVLMDEIGRGTSTYDGLSLAWACAESLANRIKALTLFATHYFELTQLPEKMEGVANVHLDAIEHGDTIAFMHSVQDGAASKSYGLAVAALAGVPKEVIKRARQKLRELESLSGNAAATQVDGTQMSLLAAAEETSPAVEALENLDPDSLSPRQALEWIYRLKSLV.

614–621 is a binding site for ATP; the sequence is GPNMGGKS.

This sequence belongs to the DNA mismatch repair MutS family.

This protein is involved in the repair of mismatches in DNA. It is possible that it carries out the mismatch recognition step. This protein has a weak ATPase activity. The chain is DNA mismatch repair protein MutS from Cronobacter sakazakii (strain ATCC BAA-894) (Enterobacter sakazakii).